The following is a 257-amino-acid chain: Aspartate/glutamate leucyltransferase (257 aa).

Belongs to the R-transferase family. Bpt subfamily.

The protein resides in the cytoplasm. The catalysed reaction is N-terminal L-glutamyl-[protein] + L-leucyl-tRNA(Leu) = N-terminal L-leucyl-L-glutamyl-[protein] + tRNA(Leu) + H(+). It catalyses the reaction N-terminal L-aspartyl-[protein] + L-leucyl-tRNA(Leu) = N-terminal L-leucyl-L-aspartyl-[protein] + tRNA(Leu) + H(+). Its function is as follows. Functions in the N-end rule pathway of protein degradation where it conjugates Leu from its aminoacyl-tRNA to the N-termini of proteins containing an N-terminal aspartate or glutamate. The sequence is that of Aspartate/glutamate leucyltransferase from Sphingopyxis alaskensis (strain DSM 13593 / LMG 18877 / RB2256) (Sphingomonas alaskensis).